The chain runs to 173 residues: Acireductone dioxygenase (173 aa).

The interval 1–21 (MKFYYHDNDSSVDQCAPHDSG) is disordered. The Fe(2+) site is built by His-84, His-86, Glu-90, and His-129. Positions 84, 86, 90, and 129 each coordinate Ni(2+).

It belongs to the acireductone dioxygenase (ARD) family. It depends on Fe(2+) as a cofactor. Ni(2+) is required as a cofactor.

It localises to the cytoplasm. Its subcellular location is the nucleus. The enzyme catalyses 1,2-dihydroxy-5-(methylsulfanyl)pent-1-en-3-one + O2 = 4-methylsulfanyl-2-oxobutanoate + formate + 2 H(+). It carries out the reaction 1,2-dihydroxy-5-(methylsulfanyl)pent-1-en-3-one + O2 = 3-(methylsulfanyl)propanoate + CO + formate + 2 H(+). The protein operates within amino-acid biosynthesis; L-methionine biosynthesis via salvage pathway; L-methionine from S-methyl-5-thio-alpha-D-ribose 1-phosphate: step 5/6. Functionally, catalyzes 2 different reactions between oxygen and the acireductone 1,2-dihydroxy-3-keto-5-methylthiopentene (DHK-MTPene) depending upon the metal bound in the active site. Fe-containing acireductone dioxygenase (Fe-ARD) produces formate and 2-keto-4-methylthiobutyrate (KMTB), the alpha-ketoacid precursor of methionine in the methionine recycle pathway. Ni-containing acireductone dioxygenase (Ni-ARD) produces methylthiopropionate, carbon monoxide and formate, and does not lie on the methionine recycle pathway. This Yarrowia lipolytica (strain CLIB 122 / E 150) (Yeast) protein is Acireductone dioxygenase.